A 437-amino-acid chain; its full sequence is Epsilon-sarcoglycan (437 aa).

Residues 1 to 317 (MQLPRWWELG…LKSRDYYTDF (317 aa)) lie on the Extracellular side of the membrane. An N-linked (GlcNAc...) asparagine glycan is attached at Asn-200. A helical membrane pass occupies residues 318–338 (LITLAVPSAVALVLFLILAYI). Topologically, residues 339 to 437 (MCCRREGVEK…QQQTTGKWYP (99 aa)) are cytoplasmic.

The protein belongs to the sarcoglycan alpha/epsilon family. N-glycosylated. In terms of processing, ubiquitinated, leading to its degradation by the proteasome. As to expression, ubiquitous.

Its subcellular location is the cell membrane. The protein localises to the sarcolemma. It is found in the cytoplasm. The protein resides in the cytoskeleton. It localises to the cell projection. Its subcellular location is the dendrite. The protein localises to the golgi apparatus. In terms of biological role, component of the sarcoglycan complex, a subcomplex of the dystrophin-glycoprotein complex which forms a link between the F-actin cytoskeleton and the extracellular matrix. This Homo sapiens (Human) protein is Epsilon-sarcoglycan (SGCE).